Here is a 193-residue protein sequence, read N- to C-terminus: dCTP deaminase (193 aa).

Residues Arg-110–Arg-115, Asp-128, Val-136–Glu-138, Tyr-171, Lys-178, and Gln-182 contribute to the dCTP site. Glu-138 acts as the Proton donor/acceptor in catalysis. A disordered region spans residues Arg-174–Asp-193.

This sequence belongs to the dCTP deaminase family. In terms of assembly, homotrimer.

The catalysed reaction is dCTP + H2O + H(+) = dUTP + NH4(+). It functions in the pathway pyrimidine metabolism; dUMP biosynthesis; dUMP from dCTP (dUTP route): step 1/2. In terms of biological role, catalyzes the deamination of dCTP to dUTP. In Shewanella baltica (strain OS223), this protein is dCTP deaminase.